Here is a 458-residue protein sequence, read N- to C-terminus: Argininosuccinate lyase (458 aa).

This sequence belongs to the lyase 1 family. Argininosuccinate lyase subfamily.

It localises to the cytoplasm. The catalysed reaction is 2-(N(omega)-L-arginino)succinate = fumarate + L-arginine. It participates in amino-acid biosynthesis; L-arginine biosynthesis; L-arginine from L-ornithine and carbamoyl phosphate: step 3/3. This chain is Argininosuccinate lyase, found in Geobacter sp. (strain M21).